Here is a 567-residue protein sequence, read N- to C-terminus: Potassium-transporting ATPase potassium-binding subunit (567 aa).

The next 11 helical transmembrane spans lie at Phe3–Leu23, Leu64–Val84, Ala136–Ile156, Leu179–Pro199, Leu254–Phe274, Trp285–Ala305, Phe330–Val350, Phe357–Val376, Met421–Leu441, Ala473–Gly495, and Gly527–Phe547.

This sequence belongs to the KdpA family. The system is composed of three essential subunits: KdpA, KdpB and KdpC.

The protein resides in the cell inner membrane. Functionally, part of the high-affinity ATP-driven potassium transport (or Kdp) system, which catalyzes the hydrolysis of ATP coupled with the electrogenic transport of potassium into the cytoplasm. This subunit binds the periplasmic potassium ions and delivers the ions to the membrane domain of KdpB through an intramembrane tunnel. The protein is Potassium-transporting ATPase potassium-binding subunit of Rhodopseudomonas palustris (strain ATCC BAA-98 / CGA009).